The following is a 575-amino-acid chain: DNA mismatch repair protein MutL (575 aa).

This sequence belongs to the DNA mismatch repair MutL/HexB family.

Its function is as follows. This protein is involved in the repair of mismatches in DNA. It is required for dam-dependent methyl-directed DNA mismatch repair. May act as a 'molecular matchmaker', a protein that promotes the formation of a stable complex between two or more DNA-binding proteins in an ATP-dependent manner without itself being part of a final effector complex. The chain is DNA mismatch repair protein MutL from Coxiella burnetii (strain CbuG_Q212) (Coxiella burnetii (strain Q212)).